A 252-amino-acid polypeptide reads, in one-letter code: Probable transcriptional regulatory protein Tmel_0985 (252 aa).

This sequence belongs to the TACO1 family.

It localises to the cytoplasm. The protein is Probable transcriptional regulatory protein Tmel_0985 of Thermosipho melanesiensis (strain DSM 12029 / CIP 104789 / BI429).